The following is a 391-amino-acid chain: PPE family protein PPE18 (391 aa).

The protein belongs to the mycobacterial PPE family. As to quaternary structure, interacts with human TLR2.

Its subcellular location is the secreted. The protein localises to the cell wall. The protein resides in the cell surface. In terms of biological role, could be a crucial virulence factor for intracellular survival of M.tuberculosis. Favors development of Th2-type response, and down-regulates the pro-inflammatory and Th1-type response. Specifically interacts with the human Toll-like receptor 2 (TLR2), leading to an early and sustained activation of p38 MAPK, which induces IL-10 production and activates Th2-type immune response. Also inhibits pro-inflammatory cytokines IL-12p40 and TNF-alpha production. Acts by up-regulating the expression as well as tyrosine phosphorylation of suppressor of cytokine signaling 3 (SOCS-3), leading to the inhibition of phosphorylation of I-kappa-B-alpha, thereby preventing nuclear translocation of the NF-kappa-B/REL subunits and expression of NF-kappa-B regulated genes like IL-12 and TNF-alpha. Induction of SOCS-3 probably depends on the activation of p38 MAPK. This Mycobacterium tuberculosis (strain ATCC 25618 / H37Rv) protein is PPE family protein PPE18.